Here is a 168-residue protein sequence, read N- to C-terminus: Alkyl hydroperoxide reductase C (168 aa).

A Thioredoxin domain is found at 1–138; that stretch reads EFIEVSEESF…LVNKIKAAQY (138 aa). Cys-28 serves as the catalytic Cysteine sulfenic acid (-SOH) intermediate.

This sequence belongs to the peroxiredoxin family. AhpC/Prx1 subfamily. As to quaternary structure, homodimer; disulfide-linked, upon oxidation. 5 homodimers assemble to form a ring-like decamer.

The protein localises to the cytoplasm. The catalysed reaction is a hydroperoxide + NADH + H(+) = an alcohol + NAD(+) + H2O. Thiol-specific peroxidase that catalyzes the reduction of hydrogen peroxide and organic hydroperoxides to water and alcohols, respectively. Plays a role in cell protection against oxidative stress by detoxifying peroxides. This chain is Alkyl hydroperoxide reductase C, found in Ferdinandcohnia aciditolerans (strain JCM 32973 / CCTCC AB 2017280 / YN-1) (Bacillus aciditolerans).